The chain runs to 149 residues: MKSTLRISLKAGERIFINGAVLRVDRKVALEFLNDVTFLLENHVLQPEGATTPLRQLYFIAQMILINPEGKDHSTAMFRKSITMLLTCFKNEEILAELKRIDALVSTGRAFDALKAIRGLYAIEDNILNNQELPPTMVEQIRREIAPWR.

The protein belongs to the FlbT family.

Has a post-transcriptional repressor function in flagellum biogenesis. Associates with the 5'-UTR of fljK mRNA and promotes its degradation. The sequence is that of Probable flagellum biosynthesis repressor protein FlbT from Rhizobium etli (strain ATCC 51251 / DSM 11541 / JCM 21823 / NBRC 15573 / CFN 42).